Reading from the N-terminus, the 816-residue chain is Bifunctional aspartokinase/homoserine dehydrogenase (816 aa).

The segment at 1–250 (MKLLKFGGTS…VPNARLLKSI (250 aa)) is aspartokinase. The interval 251–471 (SYQEAMELSY…FNKKTIHMFL (221 aa)) is interface. The ACT domain occupies 402-479 (IVGSNIYKKH…FLIGIGGIGS (78 aa)). Positions 472-816 (IGIGGIGSTL…VFSDLLRTLS (345 aa)) are homoserine dehydrogenase. The NAD(+) site is built by glycine 476, isoleucine 477, and alanine 505. Isoleucine 477 contributes to the NADP(+) binding site. Isoleucine 477 is a binding site for NADPH. The NADP(+) site is built by lysine 508 and threonine 556. Threonine 556 contacts NAD(+). Positions 556, 557, 578, and 580 each coordinate NADPH. NADP(+) contacts are provided by serine 578 and lysine 580. Positions 607, 610, 612, and 614 each coordinate Na(+). 2 residues coordinate NADP(+): glycine 665 and glutamate 668. The L-homoserine site is built by glutamate 668 and aspartate 679. Lysine 683 functions as the Proton donor in the catalytic mechanism. Glycine 799 is an NAD(+) binding site. Glycine 799 contacts NADP(+). An NADPH-binding site is contributed by glycine 799.

This sequence in the N-terminal section; belongs to the aspartokinase family. The protein in the C-terminal section; belongs to the homoserine dehydrogenase family. Homotetramer. A metal cation serves as cofactor.

The catalysed reaction is L-homoserine + NADP(+) = L-aspartate 4-semialdehyde + NADPH + H(+). It catalyses the reaction L-homoserine + NAD(+) = L-aspartate 4-semialdehyde + NADH + H(+). It carries out the reaction L-aspartate + ATP = 4-phospho-L-aspartate + ADP. Its pathway is amino-acid biosynthesis; L-lysine biosynthesis via DAP pathway; (S)-tetrahydrodipicolinate from L-aspartate: step 1/4. The protein operates within amino-acid biosynthesis; L-methionine biosynthesis via de novo pathway; L-homoserine from L-aspartate: step 1/3. It functions in the pathway amino-acid biosynthesis; L-methionine biosynthesis via de novo pathway; L-homoserine from L-aspartate: step 3/3. It participates in amino-acid biosynthesis; L-threonine biosynthesis; L-threonine from L-aspartate: step 1/5. Its pathway is amino-acid biosynthesis; L-threonine biosynthesis; L-threonine from L-aspartate: step 3/5. In terms of biological role, bifunctional aspartate kinase and homoserine dehydrogenase that catalyzes the first and the third steps toward the synthesis of lysine, methionine and threonine from aspartate. The sequence is that of Bifunctional aspartokinase/homoserine dehydrogenase (thrA) from Buchnera aphidicola subsp. Acyrthosiphon pisum (strain APS) (Acyrthosiphon pisum symbiotic bacterium).